The sequence spans 352 residues: Holliday junction branch migration complex subunit RuvB (352 aa).

Positions 4-185 (ADRLIAATGP…FGIVQRLEFY (182 aa)) are large ATPase domain (RuvB-L). Residues I24, R25, G66, K69, T70, T71, 132-134 (EDF), R175, Y185, and R222 each bind ATP. A Mg(2+)-binding site is contributed by T70. Positions 186–256 (STADLATIVS…IADLALNLLD (71 aa)) are small ATPAse domain (RuvB-S). Residues 259-352 (ERGFDHQDRR…VDEFLDAVDD (94 aa)) form a head domain (RuvB-H) region. 3 residues coordinate DNA: R295, R314, and R319.

This sequence belongs to the RuvB family. Homohexamer. Forms an RuvA(8)-RuvB(12)-Holliday junction (HJ) complex. HJ DNA is sandwiched between 2 RuvA tetramers; dsDNA enters through RuvA and exits via RuvB. An RuvB hexamer assembles on each DNA strand where it exits the tetramer. Each RuvB hexamer is contacted by two RuvA subunits (via domain III) on 2 adjacent RuvB subunits; this complex drives branch migration. In the full resolvosome a probable DNA-RuvA(4)-RuvB(12)-RuvC(2) complex forms which resolves the HJ.

Its subcellular location is the cytoplasm. The catalysed reaction is ATP + H2O = ADP + phosphate + H(+). Its function is as follows. The RuvA-RuvB-RuvC complex processes Holliday junction (HJ) DNA during genetic recombination and DNA repair, while the RuvA-RuvB complex plays an important role in the rescue of blocked DNA replication forks via replication fork reversal (RFR). RuvA specifically binds to HJ cruciform DNA, conferring on it an open structure. The RuvB hexamer acts as an ATP-dependent pump, pulling dsDNA into and through the RuvAB complex. RuvB forms 2 homohexamers on either side of HJ DNA bound by 1 or 2 RuvA tetramers; 4 subunits per hexamer contact DNA at a time. Coordinated motions by a converter formed by DNA-disengaged RuvB subunits stimulates ATP hydrolysis and nucleotide exchange. Immobilization of the converter enables RuvB to convert the ATP-contained energy into a lever motion, pulling 2 nucleotides of DNA out of the RuvA tetramer per ATP hydrolyzed, thus driving DNA branch migration. The RuvB motors rotate together with the DNA substrate, which together with the progressing nucleotide cycle form the mechanistic basis for DNA recombination by continuous HJ branch migration. Branch migration allows RuvC to scan DNA until it finds its consensus sequence, where it cleaves and resolves cruciform DNA. This is Holliday junction branch migration complex subunit RuvB from Pseudomonas fluorescens (strain ATCC BAA-477 / NRRL B-23932 / Pf-5).